Consider the following 117-residue polypeptide: G antigen 1 (117 aa).

Positions 1–117 (MSWRGRSTYY…PEEGEGQSQC (117 aa)) are disordered. 2 stretches are compositionally biased toward acidic residues: residues 32-45 (FSDE…EEGE) and 87-96 (ECEDGPDGQE).

The protein belongs to the GAGE family. In terms of tissue distribution, expressed in a variety of tumor tissues but not in normal tissues, except testis.

Antigen, recognized on melanoma by autologous cytolytic T-lymphocytes. In Homo sapiens (Human), this protein is G antigen 1.